The chain runs to 185 residues: Protein GrpE (185 aa).

Residues 1–20 are compositionally biased toward basic and acidic residues; sequence MSQEKKEELQSEAQVTKEET. The segment at 1–28 is disordered; the sequence is MSQEKKEELQSEAQVTKEETPQANEAAA.

This sequence belongs to the GrpE family. As to quaternary structure, homodimer.

Its subcellular location is the cytoplasm. In terms of biological role, participates actively in the response to hyperosmotic and heat shock by preventing the aggregation of stress-denatured proteins, in association with DnaK and GrpE. It is the nucleotide exchange factor for DnaK and may function as a thermosensor. Unfolded proteins bind initially to DnaJ; upon interaction with the DnaJ-bound protein, DnaK hydrolyzes its bound ATP, resulting in the formation of a stable complex. GrpE releases ADP from DnaK; ATP binding to DnaK triggers the release of the substrate protein, thus completing the reaction cycle. Several rounds of ATP-dependent interactions between DnaJ, DnaK and GrpE are required for fully efficient folding. The chain is Protein GrpE from Sulfurimonas denitrificans (strain ATCC 33889 / DSM 1251) (Thiomicrospira denitrificans (strain ATCC 33889 / DSM 1251)).